The primary structure comprises 261 residues: 3-hydroxyacyl-CoA dehydrogenase type-2 (261 aa).

The residue at position 2 (Ala-2) is an N-acetylalanine. NAD(+)-binding residues include Ser-20, Leu-22, and Asp-41. Lys-53 carries the N6-acetyllysine; alternate modification. Lys-53 is modified (N6-succinyllysine; alternate). NAD(+) is bound by residues Asp-64 and Val-65. At Lys-69 the chain carries N6-acetyllysine. Cys-91 serves as a coordination point for NAD(+). 2 positions are modified to N6-acetyllysine: Lys-99 and Lys-105. Ser-155 lines the substrate pocket. Residues Tyr-168, Lys-172, Phe-201, and Thr-203 each coordinate NAD(+). The active-site Proton acceptor is Tyr-168. Lys-212 is subject to N6-acetyllysine; alternate. The residue at position 212 (Lys-212) is an N6-succinyllysine; alternate.

This sequence belongs to the short-chain dehydrogenases/reductases (SDR) family. In terms of assembly, homotetramer. Component of mitochondrial ribonuclease P, a complex composed of TRMT10C/MRPP1, HSD17B10/MRPP2 and PRORP/MRPP3. Interacts with TRMT10C/MRPP1; forming the MRPP1-MRPP2 subcomplex of the mitochondrial ribonuclease P complex.

The protein localises to the mitochondrion. It localises to the mitochondrion matrix. It is found in the mitochondrion nucleoid. The catalysed reaction is a (3S)-3-hydroxyacyl-CoA + NAD(+) = a 3-oxoacyl-CoA + NADH + H(+). It carries out the reaction (2S,3S)-3-hydroxy-2-methylbutanoyl-CoA + NAD(+) = 2-methyl-3-oxobutanoyl-CoA + NADH + H(+). The enzyme catalyses testosterone + NAD(+) = androst-4-ene-3,17-dione + NADH + H(+). It catalyses the reaction 5alpha-androstane-3alpha,17beta-diol + NAD(+) = 17beta-hydroxy-5alpha-androstan-3-one + NADH + H(+). The catalysed reaction is 17beta-estradiol + NAD(+) = estrone + NADH + H(+). It carries out the reaction cholate + NAD(+) = 3alpha,12alpha-dihydroxy-7-oxo-5beta-cholanate + NADH + H(+). The enzyme catalyses (3S)-3-hydroxybutanoyl-CoA + NAD(+) = acetoacetyl-CoA + NADH + H(+). It catalyses the reaction (3S)-hydroxyoctanoyl-CoA + NAD(+) = 3-oxooctanoyl-CoA + NADH + H(+). The catalysed reaction is (3S)-hydroxyhexadecanoyl-CoA + NAD(+) = 3-oxohexadecanoyl-CoA + NADH + H(+). It carries out the reaction 17beta-hydroxy-5alpha-androstan-3-one + NAD(+) = 5alpha-androstan-3,17-dione + NADH + H(+). The enzyme catalyses 5alpha-pregnan-20beta-ol-3-one + NAD(+) = 5alpha-pregnane-3,20-dione + NADH + H(+). It catalyses the reaction 3alpha-hydroxy-5alpha-pregnan-20-one + NAD(+) = 5alpha-pregnane-3,20-dione + NADH + H(+). The catalysed reaction is cortisone + NAD(+) = 17alpha-hydroxypregn-4-en-3,11,20-trione-21-al + NADH + H(+). It carries out the reaction 11-dehydrocorticosterone + NAD(+) = pregn-4-ene-3,11,20,21-tetraone + NADH + H(+). The enzyme catalyses cortisol + NAD(+) = 11beta,17alpha-dihydroxypregn-4-ene-3,20,21-trione + NADH + H(+). It catalyses the reaction chenodeoxycholate + NAD(+) = 7-oxolithocholate + NADH + H(+). The catalysed reaction is ursodeoxycholate + NAD(+) = 7-oxolithocholate + NADH + H(+). It carries out the reaction 3beta,7beta-dihydroxy-5beta-cholan-24-oate + NAD(+) = 3beta-hydroxy-7-oxo-5beta-cholan-24-oate + NADH + H(+). It functions in the pathway amino-acid degradation; L-isoleucine degradation. The protein operates within lipid metabolism; fatty acid beta-oxidation. It participates in steroid metabolism. Its pathway is lipid metabolism; bile acid biosynthesis. Functionally, mitochondrial dehydrogenase involved in pathways of fatty acid, branched-chain amino acid and steroid metabolism. Acts as (S)-3-hydroxyacyl-CoA dehydrogenase in mitochondrial fatty acid beta-oxidation, a major degradation pathway of fatty acids. Catalyzes the third step in the beta-oxidation cycle, namely the reversible conversion of (S)-3-hydroxyacyl-CoA to 3-ketoacyl-CoA. Preferentially accepts straight medium- and short-chain acyl-CoA substrates with highest efficiency for (3S)-hydroxybutanoyl-CoA. Acts as 3-hydroxy-2-methylbutyryl-CoA dehydrogenase in branched-chain amino acid catabolic pathway. Catalyzes the oxidation of 3-hydroxy-2-methylbutanoyl-CoA into 2-methyl-3-oxobutanoyl-CoA, a step in isoleucine degradation pathway. Has hydroxysteroid dehydrogenase activity toward steroid hormones and bile acids. Catalyzes the oxidation of 3alpha-, 17beta-, 20beta- and 21-hydroxysteroids and 7alpha- and 7beta-hydroxy bile acids. Oxidizes allopregnanolone/brexanolone at the 3alpha-hydroxyl group, which is known to be critical for the activation of gamma-aminobutyric acid receptors (GABAARs) chloride channel. Has phospholipase C-like activity toward cardiolipin and its oxidized species. Likely oxidizes the 2'-hydroxyl in the head group of cardiolipin to form a ketone intermediate that undergoes nucleophilic attack by water and fragments into diacylglycerol, dihydroxyacetone and orthophosphate. Has higher affinity for cardiolipin with oxidized fatty acids and may degrade these species during the oxidative stress response to protect cells from apoptosis. By interacting with intracellular amyloid-beta, it may contribute to the neuronal dysfunction associated with Alzheimer disease (AD). Essential for structural and functional integrity of mitochondria. Its function is as follows. In addition to mitochondrial dehydrogenase activity, moonlights as a component of mitochondrial ribonuclease P, a complex that cleaves tRNA molecules in their 5'-ends. Together with TRMT10C/MRPP1, forms a subcomplex of the mitochondrial ribonuclease P, named MRPP1-MRPP2 subcomplex, which displays functions that are independent of the ribonuclease P activity. The MRPP1-MRPP2 subcomplex catalyzes the formation of N(1)-methylguanine and N(1)-methyladenine at position 9 (m1G9 and m1A9, respectively) in tRNAs; HSD17B10/MRPP2 acting as a non-catalytic subunit. The MRPP1-MRPP2 subcomplex also acts as a tRNA maturation platform: following 5'-end cleavage by the mitochondrial ribonuclease P complex, the MRPP1-MRPP2 subcomplex enhances the efficiency of 3'-processing catalyzed by ELAC2, retains the tRNA product after ELAC2 processing and presents the nascent tRNA to the mitochondrial CCA tRNA nucleotidyltransferase TRNT1 enzyme. Associates with mitochondrial DNA complexes at the nucleoids to initiate RNA processing and ribosome assembly. In Bos taurus (Bovine), this protein is 3-hydroxyacyl-CoA dehydrogenase type-2 (HSD17B10).